The sequence spans 275 residues: Large ribosomal subunit protein uL2 (275 aa).

The segment at 220–275 (VRGAAMNPRDHPHGGGEGRAPRGMPTPKTKWGKPARGVKTRHNPRTDPFIIRRRTR) is disordered. Residues 227 to 239 (PRDHPHGGGEGRA) are compositionally biased toward basic and acidic residues. A compositionally biased stretch (basic residues) spans 249 to 262 (KWGKPARGVKTRHN).

It belongs to the universal ribosomal protein uL2 family. As to quaternary structure, part of the 50S ribosomal subunit. Forms a bridge to the 30S subunit in the 70S ribosome.

One of the primary rRNA binding proteins. Required for association of the 30S and 50S subunits to form the 70S ribosome, for tRNA binding and peptide bond formation. It has been suggested to have peptidyltransferase activity; this is somewhat controversial. Makes several contacts with the 16S rRNA in the 70S ribosome. The chain is Large ribosomal subunit protein uL2 from Roseiflexus sp. (strain RS-1).